Reading from the N-terminus, the 380-residue chain is Shedu protein SduA (380 aa).

Its function is as follows. Only component of antiviral defense system Shedu. Expression of Shedu in B.subtilis (strain BEST7003) confers resistance to phages phi105, phi29, rho14 and to a lesser extent to SPP1. May be an endonuclease. The sequence is that of Shedu protein SduA from Bacillus cereus (strain B4264).